Here is a 113-residue protein sequence, read N- to C-terminus: Death-associated protein-like 1.L (113 aa).

The interval Met1 to Leu57 is disordered.

This sequence belongs to the DAP-DAPL1 family. Associates with ribosomes; preventing translation. Interacts with eiF5a (eif5a and eif5a2); preventing translation.

Its function is as follows. Ribosome-binding protein that promotes ribosome hibernation, a process during which ribosomes are stabilized in an inactive state and preserved from proteasomal degradation. Acts via its association with eiF5a (eif5a and eif5a2) at the polypeptide exit tunnel of the ribosome, preventing mRNA translation. Plays a key role in ribosome hibernation in the mature egg by preventing mRNA translation, leading to ribosome inactivation. Ribosomes, which are produced in large quantities during oogenesis, are stored and translationally repressed in the egg and early embryo. This chain is Death-associated protein-like 1.L (dapl1.L), found in Xenopus laevis (African clawed frog).